Reading from the N-terminus, the 895-residue chain is Alanine--tRNA ligase (895 aa).

Residues histidine 586, histidine 590, cysteine 690, and histidine 694 each contribute to the Zn(2+) site.

This sequence belongs to the class-II aminoacyl-tRNA synthetase family. The cofactor is Zn(2+).

It localises to the cytoplasm. The catalysed reaction is tRNA(Ala) + L-alanine + ATP = L-alanyl-tRNA(Ala) + AMP + diphosphate. Catalyzes the attachment of alanine to tRNA(Ala) in a two-step reaction: alanine is first activated by ATP to form Ala-AMP and then transferred to the acceptor end of tRNA(Ala). Also edits incorrectly charged Ser-tRNA(Ala) and Gly-tRNA(Ala) via its editing domain. The sequence is that of Alanine--tRNA ligase from Korarchaeum cryptofilum (strain OPF8).